A 201-amino-acid polypeptide reads, in one-letter code: UPF0637 protein LCA_0842 (201 aa).

Belongs to the UPF0637 family.

The polypeptide is UPF0637 protein LCA_0842 (Latilactobacillus sakei subsp. sakei (strain 23K) (Lactobacillus sakei subsp. sakei)).